The sequence spans 233 residues: Large ribosomal subunit protein uL1 (233 aa).

It belongs to the universal ribosomal protein uL1 family. As to quaternary structure, part of the 50S ribosomal subunit.

Functionally, binds directly to 23S rRNA. The L1 stalk is quite mobile in the ribosome, and is involved in E site tRNA release. Protein L1 is also a translational repressor protein, it controls the translation of the L11 operon by binding to its mRNA. The polypeptide is Large ribosomal subunit protein uL1 (Campylobacter jejuni subsp. doylei (strain ATCC BAA-1458 / RM4099 / 269.97)).